We begin with the raw amino-acid sequence, 383 residues long: Galactokinase (383 aa).

34-37 contributes to the substrate binding site; that stretch reads EHTD. 124–130 is an ATP binding site; the sequence is GAGLSSS. Mg(2+)-binding residues include Ser-130 and Glu-162. Asp-174 functions as the Proton acceptor in the catalytic mechanism. Position 223 (Tyr-223) interacts with substrate.

It belongs to the GHMP kinase family. GalK subfamily.

It is found in the cytoplasm. It catalyses the reaction alpha-D-galactose + ATP = alpha-D-galactose 1-phosphate + ADP + H(+). Its pathway is carbohydrate metabolism; galactose metabolism. Functionally, catalyzes the transfer of the gamma-phosphate of ATP to D-galactose to form alpha-D-galactose-1-phosphate (Gal-1-P). The sequence is that of Galactokinase from Yersinia pseudotuberculosis serotype IB (strain PB1/+).